Here is a 688-residue protein sequence, read N- to C-terminus: Glycine--tRNA ligase beta subunit (688 aa).

The protein belongs to the class-II aminoacyl-tRNA synthetase family. Tetramer of two alpha and two beta subunits.

The protein resides in the cytoplasm. The enzyme catalyses tRNA(Gly) + glycine + ATP = glycyl-tRNA(Gly) + AMP + diphosphate. This chain is Glycine--tRNA ligase beta subunit (glyS), found in Haemophilus influenzae (strain ATCC 51907 / DSM 11121 / KW20 / Rd).